Here is a 545-residue protein sequence, read N- to C-terminus: 2-succinyl-5-enolpyruvyl-6-hydroxy-3-cyclohexene-1-carboxylate synthase (545 aa).

A compositionally biased stretch (polar residues) spans 170–185 (QVSGLQRSAPAPSSDS). The tract at residues 170–193 (QVSGLQRSAPAPSSDSPLGAAPQL) is disordered.

This sequence belongs to the TPP enzyme family. MenD subfamily. In terms of assembly, homodimer. Mg(2+) is required as a cofactor. Mn(2+) serves as cofactor. It depends on thiamine diphosphate as a cofactor.

The catalysed reaction is isochorismate + 2-oxoglutarate + H(+) = 5-enolpyruvoyl-6-hydroxy-2-succinyl-cyclohex-3-ene-1-carboxylate + CO2. Its pathway is quinol/quinone metabolism; 1,4-dihydroxy-2-naphthoate biosynthesis; 1,4-dihydroxy-2-naphthoate from chorismate: step 2/7. It participates in cofactor biosynthesis; phylloquinone biosynthesis. Functionally, catalyzes the thiamine diphosphate-dependent decarboxylation of 2-oxoglutarate and the subsequent addition of the resulting succinic semialdehyde-thiamine pyrophosphate anion to isochorismate to yield 2-succinyl-5-enolpyruvyl-6-hydroxy-3-cyclohexene-1-carboxylate (SEPHCHC). This chain is 2-succinyl-5-enolpyruvyl-6-hydroxy-3-cyclohexene-1-carboxylate synthase, found in Parasynechococcus marenigrum (strain WH8102).